A 235-amino-acid polypeptide reads, in one-letter code: Orotidine 5'-phosphate decarboxylase (235 aa).

Residues D10, K33, 60-69 (DLKMNDIPNT), T123, R185, Q194, G214, and R215 each bind substrate. Catalysis depends on K62, which acts as the Proton donor.

The protein belongs to the OMP decarboxylase family. Type 1 subfamily. Homodimer.

It carries out the reaction orotidine 5'-phosphate + H(+) = UMP + CO2. It functions in the pathway pyrimidine metabolism; UMP biosynthesis via de novo pathway; UMP from orotate: step 2/2. Functionally, catalyzes the decarboxylation of orotidine 5'-monophosphate (OMP) to uridine 5'-monophosphate (UMP). In Lactobacillus johnsonii (strain CNCM I-12250 / La1 / NCC 533), this protein is Orotidine 5'-phosphate decarboxylase.